Here is a 204-residue protein sequence, read N- to C-terminus: Tetraspanin-13 (204 aa).

The Cytoplasmic segment spans residues 1–19; it reads MVCGGFSCSKNCLCALNLL. A helical transmembrane segment spans residues 20 to 40; it reads YTLVSLLLIGIAAWGIGFGLI. Residues 41 to 44 lie on the Extracellular side of the membrane; sequence SSLR. The helical transmembrane segment at 45-65 threads the bilayer; that stretch reads VVGVVIAVGIFLFLIALVGLI. At 66-72 the chain is on the cytoplasmic side; the sequence is GAVKHHQ. The helical transmembrane segment at 73 to 93 threads the bilayer; that stretch reads VLLFFYMIILLLVFIVQFSVS. Topologically, residues 94–167 are extracellular; the sequence is CACLALNREQ…IGEYAGEVLR (74 aa). Asn113 and Asn137 each carry an N-linked (GlcNAc...) asparagine glycan. Ser143 bears the Phosphoserine mark. Residues 168–188 form a helical membrane-spanning segment; that stretch reads FVGGIGLFFSFTEILGVWLTY. Residues 189–204 are Cytoplasmic-facing; that stretch reads RYRNQKDPRANPSAFL.

Belongs to the tetraspanin (TM4SF) family.

The protein localises to the membrane. The protein is Tetraspanin-13 (Tspan13) of Mus musculus (Mouse).